The sequence spans 930 residues: MCETYSRWLLRVSVAQICQALGWDSVQVSACDLLTDVLQRYLQGLGRGCHRYCELYGRTDPILDDVGDAFKLMGVNLHELEDYIHNIEPVTFAHQIPSFPVSKNNVLQFPQPGSKDAEERKEYIPDYMPPIVSSQEEEEEEQVPTDGGTSAEAMQVPLEEEGDMEEDEAINDENYLSKRPLESPDAEEFPPMKRPKLSVSKGDALDGALEPREPLSSINTQKVPPMLSPVHVQDSTDLAPPSPEPPMLAPIAKSQVPTPKTLESKPPAPKTKSKTSSPGQKTKSPKTTPSPVVAGSPIRSPKTGSKEKKSPGRAKSPKSPKSPKAPVHVPPPPVKPETPSRTPLAALSDKIGKENIQVKQGQTPPEPVTKPNIENQTKKLPVVDKTIDDSIDAVIARACAEREPDPFEFSSGSESEGEIFTSPKRLSVSETTATTPKPSVSTNCSNKAGATPVPPSGGTSSSDISWTMDDSIDEVIRKANMGTPSNPPANFTYFSSPSASPPTPEPLLKVYEEKTKLASSVEVKKKLKKELKTKMKKKEKQKEKDKEKSKEKNKEKEKNKEKDKDKEGNKEAKFQWKELLKDDEHDPYKFKLKDFEDADTKVKLKDGNTKKEKEKHKDKKKEKEKGKKDKDKKDKEKVKDKSKEDKIKPPSAPLVLPPKEMSLPLFSTPTAMRLPSMLPSLSPMLPEKLFEDKEKPKEKKKDKKEKKKKKEREKDKEKEKKDKEKERKEREKKEKEKEKHKHEKIKVEPVVPAPSPVIPRLTLRVGAGQDKIVISKVVPAPEAKPATPVSRPKTPPPVPSPVPAPVHVTPPPAPVPAPPQPTVSPALLPPASPAVSAAGGSKAPVRSVVTETVSTYVIRDEWGNQIWFCPGCNKPDDGSPMIGCDDCDDWYHWPCVGITAAPPEEMQWFCSKCANKKKDKKHKKRKHRAH.

6 disordered regions span residues 128 to 151, 175 to 381, 404 to 507, 519 to 578, 599 to 755, and 782 to 820; these read MPPIVSSQEEEEEEQVPTDGGTSA, YLSK…KKLP, PDPF…PEPL, SSVE…QWKE, DTKV…PAPS, and EAKPATPVSRPKTPPPVPSPVPAPVHVTPPPAPVPAPPQ. The span at 274–291 shows a compositional bias: low complexity; sequence KTSSPGQKTKSPKTTPSP. Positions 428-446 are enriched in polar residues; the sequence is VSETTATTPKPSVSTNCSN. Positions 448-462 are enriched in low complexity; it reads AGATPVPPSGGTSSS. A compositionally biased stretch (polar residues) spans 482–494; the sequence is GTPSNPPANFTYF. The span at 525 to 539 shows a compositional bias: basic residues; the sequence is KKLKKELKTKMKKKE. Basic and acidic residues-rich tracts occupy residues 540–578, 599–612, and 621–648; these read KQKEKDKEKSKEKNKEKEKNKEKDKDKEGNKEAKFQWKE, DTKVKLKDGNTKKE, and KEKEKGKKDKDKKDKEKVKDKSKEDKIK. A compositionally biased stretch (low complexity) spans 674–686; that stretch reads LPSMLPSLSPMLP. Residues 688–699 show a composition bias toward basic and acidic residues; sequence KLFEDKEKPKEK. The span at 700–711 shows a compositional bias: basic residues; sequence KKDKKEKKKKKE. Residues 712–737 are compositionally biased toward basic and acidic residues; the sequence is REKDKEKEKKDKEKERKEREKKEKEK. A compositionally biased stretch (pro residues) spans 793–820; sequence KTPPPVPSPVPAPVHVTPPPAPVPAPPQ. Residues 866 to 916 form a PHD-type zinc finger; sequence IWFCPGCNKPDDGSPMIGCDDCDDWYHWPCVGITAAPPEEMQWFCSKCANK.

The protein belongs to the TAF3 family. In terms of assembly, component of the TFIID basal transcription factor complex, composed of TATA-box-binding protein TBP, and a number of TBP-associated factors (TAFs), including TAF1, TAF2, TAF3, TAF4, TAF5, TAF6, TAF7, TAF8, TAF9, TAF10, TAF11, TAF12 and TAF13. Interacts with TAF10 via the histone fold. Interacts with TAF13, TBP, SAP130 and GCN5L2. Interacts with TBPL2.

The protein localises to the nucleus. Functionally, the TFIID basal transcription factor complex plays a major role in the initiation of RNA polymerase II (Pol II)-dependent transcription. TFIID recognizes and binds promoters with or without a TATA box via its subunit TBP, a TATA-box-binding protein, and promotes assembly of the pre-initiation complex (PIC). The TFIID complex consists of TBP and TBP-associated factors (TAFs), including TAF1, TAF2, TAF3, TAF4, TAF5, TAF6, TAF7, TAF8, TAF9, TAF10, TAF11, TAF12 and TAF13. The TFIID complex structure can be divided into 3 modules TFIID-A, TFIID-B, and TFIID-C. TAF3 forms the TFIID-A module together with TAF5 and TBP. Required in complex with TBPL2 for the differentiation of myoblasts into myocytes. The TAF3-TBPL2 complex replaces TFIID at specific promoters at an early stage in the differentiation process. The protein is Transcription initiation factor TFIID subunit 3 (TAF3) of Gallus gallus (Chicken).